A 197-amino-acid chain; its full sequence is Phosphoheptose isomerase (197 aa).

The 158-residue stretch at 40-197 folds into the SIS domain; it reads CIASIAQGGK…LVEHSIFGKQ (158 aa). 55 to 57 lines the substrate pocket; the sequence is NGG. Residues His-64 and Glu-68 each coordinate Zn(2+). Residues Glu-68, 97 to 98, 123 to 125, Ser-128, and Gln-175 contribute to the substrate site; these read ND and STS. The Zn(2+) site is built by Gln-175 and His-183.

This sequence belongs to the SIS family. GmhA subfamily. In terms of assembly, homotetramer. Zn(2+) serves as cofactor.

It is found in the cytoplasm. It carries out the reaction 2 D-sedoheptulose 7-phosphate = D-glycero-alpha-D-manno-heptose 7-phosphate + D-glycero-beta-D-manno-heptose 7-phosphate. It participates in carbohydrate biosynthesis; D-glycero-D-manno-heptose 7-phosphate biosynthesis; D-glycero-alpha-D-manno-heptose 7-phosphate and D-glycero-beta-D-manno-heptose 7-phosphate from sedoheptulose 7-phosphate: step 1/1. It functions in the pathway capsule biogenesis; capsule polysaccharide biosynthesis. Catalyzes the isomerization of sedoheptulose 7-phosphate in D-glycero-D-manno-heptose 7-phosphate. This is Phosphoheptose isomerase from Burkholderia mallei (strain ATCC 23344).